The primary structure comprises 274 residues: Acetyl-coenzyme A carboxylase carboxyl transferase subunit beta (274 aa).

Residues 18-274 (IWTKCKKCDY…FYNRQCFLKF (257 aa)) form the CoA carboxyltransferase N-terminal domain. Zn(2+)-binding residues include Cys22, Cys25, Cys41, and Cys44. Residues 22 to 44 (CKKCDYILLQKDFEENLMVCPKC) form a C4-type zinc finger.

Belongs to the AccD/PCCB family. In terms of assembly, acetyl-CoA carboxylase is a heterohexamer composed of biotin carboxyl carrier protein (AccB), biotin carboxylase (AccC) and two subunits each of ACCase subunit alpha (AccA) and ACCase subunit beta (AccD). It depends on Zn(2+) as a cofactor.

The protein resides in the cytoplasm. It carries out the reaction N(6)-carboxybiotinyl-L-lysyl-[protein] + acetyl-CoA = N(6)-biotinyl-L-lysyl-[protein] + malonyl-CoA. It functions in the pathway lipid metabolism; malonyl-CoA biosynthesis; malonyl-CoA from acetyl-CoA: step 1/1. Functionally, component of the acetyl coenzyme A carboxylase (ACC) complex. Biotin carboxylase (BC) catalyzes the carboxylation of biotin on its carrier protein (BCCP) and then the CO(2) group is transferred by the transcarboxylase to acetyl-CoA to form malonyl-CoA. The protein is Acetyl-coenzyme A carboxylase carboxyl transferase subunit beta of Endomicrobium trichonymphae.